A 107-amino-acid chain; its full sequence is EMBRYO SURROUNDING FACTOR 1-like protein 5 (107 aa).

The first 22 residues, 1–22 (MSLLRFAILCIIFVSLFGVHEC), serve as a signal peptide directing secretion. Intrachain disulfides connect C35-C49, C40-C69, C47-C65, and C50-C58. The helical transmembrane segment at 87 to 107 (GLGPPIYLFFLGQFIYFVLGL) threads the bilayer.

Belongs to the MEG family. As to expression, expressed in flowers.

It is found in the membrane. The protein is EMBRYO SURROUNDING FACTOR 1-like protein 5 (ESFL5) of Arabidopsis thaliana (Mouse-ear cress).